A 415-amino-acid chain; its full sequence is Membrane-bound ghrelin O-acyltransferase mboat4 (415 aa).

Residues methionine 1 to tryptophan 6 lie on the Lumenal side of the membrane. A helical transmembrane segment spans residues isoleucine 7 to phenylalanine 28. Topologically, residues histidine 29–arginine 42 are cytoplasmic. A helical membrane pass occupies residues tyrosine 43–methionine 58. The Lumenal segment spans residues glycine 59–tyrosine 61. The chain crosses the membrane as a helical span at residues serine 62–tyrosine 78. At isoleucine 79 to leucine 84 the chain is on the cytoplasmic side. The chain crosses the membrane as a helical span at residues histidine 85–valine 103. Residues glutamine 104–isoleucine 122 lie on the Lumenal side of the membrane. A helical membrane pass occupies residues serine 123–aspartate 138. Residues phenylalanine 139–threonine 193 lie on the Cytoplasmic side of the membrane. Residues serine 194 to lysine 214 traverse the membrane as a helical segment. At serine 215–valine 227 the chain is on the lumenal side. Residues leucine 228–methionine 247 form a helical membrane-spanning segment. The Cytoplasmic portion of the chain corresponds to serine 248 to arginine 312. Catalysis depends on residues asparagine 295 and histidine 326. The chain crosses the membrane as a helical span at residues serine 313–histidine 326. Residues glycine 327–leucine 328 are Lumenal-facing. The helical transmembrane segment at histidine 329–alanine 345 threads the bilayer. Over aspartate 346–arginine 364 the chain is Cytoplasmic. Residues leucine 365–valine 385 traverse the membrane as a helical segment. Over glutamate 386–lysine 394 the chain is Lumenal. The helical transmembrane segment at leucine 395–leucine 415 threads the bilayer.

It belongs to the membrane-bound acyltransferase family. As to quaternary structure, monomer. In terms of processing, not glycosylated.

The protein resides in the endoplasmic reticulum membrane. The enzyme catalyses octanoyl-CoA + L-seryl-[protein] = O-octanoyl-L-seryl-[protein] + CoA. The catalysed reaction is decanoyl-CoA + L-seryl-[protein] = O-decanoyl-L-seryl-[protein] + CoA. It carries out the reaction L-seryl-[protein] + acetyl-CoA = O-acetyl-L-seryl-[protein] + CoA. It catalyses the reaction L-seryl-[protein] + butanoyl-CoA = O-butanoyl-L-seryl-[protein] + CoA. The enzyme catalyses pentanoyl-CoA + L-seryl-[protein] = O-pentanoyl-L-seryl-[protein] + CoA. The catalysed reaction is hexanoyl-CoA + L-seryl-[protein] = O-hexanoyl-L-seryl-[protein] + CoA. It carries out the reaction heptanoyl-CoA + L-seryl-[protein] = O-heptanoyl-L-seryl-[protein] + CoA. It catalyses the reaction nonanoyl-CoA + L-seryl-[protein] = O-nonanoyl-L-seryl-[protein] + CoA. The enzyme catalyses L-seryl-[protein] + dodecanoyl-CoA = O-dodecanoyl-L-seryl-[protein] + CoA. The catalysed reaction is L-seryl-[protein] + tetradecanoyl-CoA = O-tetradecanoyl-L-seryl-[protein] + CoA. It carries out the reaction a fatty acyl-CoA + L-seryl-[protein] = O-fatty acyl-L-seryl-[protein] + CoA. Its function is as follows. Catalyzes ghrelin acylation at 'Ser-3' using preferentially octanoyl-CoA, hexanoyl-CoA and decanoyl-CoA as acyl-CoA donors leading to ghrelin activity. In vitro uses also acyl-CoA donors of different lengths from short-chain (C2) to long-chain fatty acids (C16) knowing that acyl-CoA donors from butanoyl-CoA (C4) to dodecanoyl-CoA (C12) are more efficient compared to longer acyl-CoA donors, such as myristoyl-CoA (C14) and palmitoyl-CoA (C16) that are not efficient. This is Membrane-bound ghrelin O-acyltransferase mboat4 from Danio rerio (Zebrafish).